The sequence spans 360 residues: MLFLLSELSGTLTPLNVFRYITFRTGGALFTAGFFVFWFGPWIISLLRLRQGKGQPIREDGPATHLTKRGTPTMGGLMILAGAVVSILLWTNPRNHYVWVTLAVTLGFGAIGFYDDYLKVTKQSHKGFSGRFRLLLEFAIAGAACLLISIYSPAGLQNQLAFPVFKDALLNLGWFWVPFAAFVIVGAGNAVNITDGLDGLAIVPVMIACGTFGVIAYLVGNSFTAGYLQVNYVRDTGELAVVCGAVIGAGLGFLWFNAPPAQIFMGDTGSLALGGLLGAIAVAAKHEIVLAIVGGLFVLEIMSVIIQVASFKLTGKRVFRMAPIHHHFEQKGWKEPQVVIRFWIIAVILALVGLATLKLR.

A run of 10 helical transmembrane segments spans residues G27–L47, G70–W90, V98–L118, L134–A154, A168–G188, G199–V219, L239–P259, I263–A283, I288–V308, and Q337–L357.

It belongs to the glycosyltransferase 4 family. MraY subfamily. The cofactor is Mg(2+).

Its subcellular location is the cell inner membrane. It carries out the reaction UDP-N-acetyl-alpha-D-muramoyl-L-alanyl-gamma-D-glutamyl-meso-2,6-diaminopimeloyl-D-alanyl-D-alanine + di-trans,octa-cis-undecaprenyl phosphate = di-trans,octa-cis-undecaprenyl diphospho-N-acetyl-alpha-D-muramoyl-L-alanyl-D-glutamyl-meso-2,6-diaminopimeloyl-D-alanyl-D-alanine + UMP. It participates in cell wall biogenesis; peptidoglycan biosynthesis. Its function is as follows. Catalyzes the initial step of the lipid cycle reactions in the biosynthesis of the cell wall peptidoglycan: transfers peptidoglycan precursor phospho-MurNAc-pentapeptide from UDP-MurNAc-pentapeptide onto the lipid carrier undecaprenyl phosphate, yielding undecaprenyl-pyrophosphoryl-MurNAc-pentapeptide, known as lipid I. The chain is Phospho-N-acetylmuramoyl-pentapeptide-transferase from Methylorubrum populi (strain ATCC BAA-705 / NCIMB 13946 / BJ001) (Methylobacterium populi).